The following is a 361-amino-acid chain: Histidinol-phosphate aminotransferase (361 aa).

At lysine 221 the chain carries N6-(pyridoxal phosphate)lysine.

The protein belongs to the class-II pyridoxal-phosphate-dependent aminotransferase family. Histidinol-phosphate aminotransferase subfamily. Homodimer. It depends on pyridoxal 5'-phosphate as a cofactor.

It catalyses the reaction L-histidinol phosphate + 2-oxoglutarate = 3-(imidazol-4-yl)-2-oxopropyl phosphate + L-glutamate. It participates in amino-acid biosynthesis; L-histidine biosynthesis; L-histidine from 5-phospho-alpha-D-ribose 1-diphosphate: step 7/9. The sequence is that of Histidinol-phosphate aminotransferase from Symbiobacterium thermophilum (strain DSM 24528 / JCM 14929 / IAM 14863 / T).